The primary structure comprises 586 residues: Cytosolic Fe-S cluster assembly factor NAR1 (586 aa).

Residues Cys-20, Cys-73, Cys-76, Cys-79, Cys-220, Cys-275, Cys-462, and Cys-466 each contribute to the [4Fe-4S] cluster site.

This sequence belongs to the NARF family.

Functionally, component of the cytosolic Fe/S protein assembly machinery. Required for maturation of extramitochondrial Fe/S proteins. May play a role in the transfer of pre-assembled Fe/S clusters to target apoproteins. This is Cytosolic Fe-S cluster assembly factor NAR1 (NAR1) from Chaetomium globosum (strain ATCC 6205 / CBS 148.51 / DSM 1962 / NBRC 6347 / NRRL 1970) (Soil fungus).